The sequence spans 367 residues: DNA replication and repair protein RecF (367 aa).

Position 30-37 (30-37) interacts with ATP; that stretch reads GSNGSGKT.

Belongs to the RecF family.

The protein resides in the cytoplasm. Functionally, the RecF protein is involved in DNA metabolism; it is required for DNA replication and normal SOS inducibility. RecF binds preferentially to single-stranded, linear DNA. It also seems to bind ATP. In Pseudomonas putida (strain ATCC 700007 / DSM 6899 / JCM 31910 / BCRC 17059 / LMG 24140 / F1), this protein is DNA replication and repair protein RecF.